The sequence spans 914 residues: MRTLGAMAVMLVVMGTAIFLPFLLRSRDILGGKTMTSHVISVVETSQLLVDNAVYNTMKRNLKKRGVLSPAQLLSFSKLPESTSGAISRAAEIMETSIQVMKREQSQFSTDALSADILATIANLSGCLPFMLPPRCPDTCLANKYRPITGVCNNRDHPRWGASNTALARWLPPVYEDGFSQPRGWNPNFLYHGFPLPPVREVTRHLIQVSNEAVTEDDQYSDFLPVWGQYIDHDIALTPQSTSTAAFWGGVDCQLTCENQNPCFPIQLPSNSSRTTACLPFYRSSAACGTGDQGALFGNLSAANPRQQMNGLTSFLDASTVYGSSPGVEKQLRNWSSSAGLLRVNTLHLDSGRAYLPFASAACAPEPGAPHANRTPCFLAGDGRASEVPALAAVHTLWLREHNRLATAFKAINTHWSANTAYQEARKVVGALHQIITMRDYIPKILGPDAFRQYVGPYEGYNPTVNPTVSNVFSTAAFRFGHATVHPLVRRLNTDFQDHTELPRLQLHDVFFRPWRLIQEGGLDPIVRGLLARPAKLQVQEQLMNEELTERLFVLSNVGTLDLASLNLQRGRDHGLPGYNEWREFCGLSRLDTGAELNKAIANRSMVNKIMELYKHADNIDVWLGGLAEKFLPGARTGPLFACIIGKQMKALRDGDRFWWENSHVFTDAQRQELEKHSLPRVICDNTGLTRVPVDAFRIGKFPQDFESCEEIPSMDLRLWRETFPQDDKCVFPEKVDNGNFVHCEESGKLVLVYSCFHGYKLQGQEQVTCTQNGWDSEPPVCKDVNECADLTHPPCHSSAKCKNTKGSFQCVCTDPYMLGEDEKTCIDSGRLPRASWVSIALGALLIGGLASLSWTVICRWTHADKKSTLLITERVTMESGFRKSQESGISPQKAEVQDAEQEPAYGSRVLLCE.

A signal peptide spans 1–31 (MRTLGAMAVMLVVMGTAIFLPFLLRSRDILG). Residues 32–834 (GKTMTSHVIS…TCIDSGRLPR (803 aa)) are Extracellular-facing. N123 is a glycosylation site (N-linked (GlcNAc...) asparagine). An intrachain disulfide couples C136 to C152. D232 lines the heme b pocket. H233 (proton acceptor) is an active-site residue. D234 is a binding site for Ca(2+). Intrachain disulfides connect C253–C263 and C257–C278. N271 and N299 each carry an N-linked (GlcNAc...) asparagine glycan. Ca(2+) contacts are provided by T313, F315, D317, and S319. The N-linked (GlcNAc...) asparagine glycan is linked to N334. Heme b contacts are provided by E387 and H482. Cystine bridges form between C586–C643, C684–C709, C730–C770, C756–C782, C788–C802, C796–C811, and C813–C826. Residue N603 is glycosylated (N-linked (GlcNAc...) asparagine). In terms of domain architecture, Sushi spans 728–783 (DKCVFPEKVDNGNFVHCEESGKLVLVYSCFHGYKLQGQEQVTCTQNGWDSEPPVCK). An EGF-like; calcium-binding domain is found at 784 to 827 (DVNECADLTHPPCHSSAKCKNTKGSFQCVCTDPYMLGEDEKTCI). The helical transmembrane segment at 835 to 859 (ASWVSIALGALLIGGLASLSWTVIC) threads the bilayer. Residues 860 to 914 (RWTHADKKSTLLITERVTMESGFRKSQESGISPQKAEVQDAEQEPAYGSRVLLCE) are Cytoplasmic-facing. The interval 882–907 (FRKSQESGISPQKAEVQDAEQEPAYG) is disordered.

Belongs to the peroxidase family. XPO subfamily. In terms of assembly, interacts with DUOX1, DUOX2 and CYBA. The cofactor is Ca(2+). It depends on heme b as a cofactor. Heme is covalently bound through a H(2)O(2)-dependent autocatalytic process. Heme insertion is important for the delivery of protein at the cell surface. Post-translationally, cleaved in its N-terminal part.

It is found in the membrane. It carries out the reaction 2 iodide + H2O2 + 2 H(+) = diiodine + 2 H2O. The enzyme catalyses [thyroglobulin]-L-tyrosine + iodide + H2O2 + H(+) = [thyroglobulin]-3-iodo-L-tyrosine + 2 H2O. The catalysed reaction is [thyroglobulin]-3-iodo-L-tyrosine + iodide + H2O2 + H(+) = [thyroglobulin]-3,5-diiodo-L-tyrosine + 2 H2O. It catalyses the reaction 2 [thyroglobulin]-3,5-diiodo-L-tyrosine + H2O2 = [thyroglobulin]-L-thyroxine + [thyroglobulin]-dehydroalanine + 2 H2O. It carries out the reaction [thyroglobulin]-3-iodo-L-tyrosine + [thyroglobulin]-3,5-diiodo-L-tyrosine + H2O2 = [thyroglobulin]-3,3',5-triiodo-L-thyronine + [thyroglobulin]-dehydroalanine + 2 H2O. Its pathway is hormone biosynthesis; thyroid hormone biosynthesis. Iodination and coupling of the hormonogenic tyrosines in thyroglobulin to yield the thyroid hormones T(3) and T(4). This Rattus norvegicus (Rat) protein is Thyroid peroxidase (Tpo).